Here is a 650-residue protein sequence, read N- to C-terminus: Probable LIM domain-containing serine/threonine-protein kinase DDB_G0287001 (650 aa).

LIM zinc-binding domains follow at residues Asn-4–Ala-63 and Arg-64–Lys-122. Disordered regions lie at residues Lys-118–Lys-138, Leu-171–Met-197, and Leu-293–Thr-320. The span at Ser-173–Asn-188 shows a compositional bias: gly residues. The Protein kinase domain occupies Val-386 to Leu-643. Residues Ile-392–Val-400 and Lys-413 each bind ATP. Asp-509 serves as the catalytic Proton acceptor.

Belongs to the protein kinase superfamily. TKL Ser/Thr protein kinase family.

It carries out the reaction L-seryl-[protein] + ATP = O-phospho-L-seryl-[protein] + ADP + H(+). The catalysed reaction is L-threonyl-[protein] + ATP = O-phospho-L-threonyl-[protein] + ADP + H(+). The chain is Probable LIM domain-containing serine/threonine-protein kinase DDB_G0287001 from Dictyostelium discoideum (Social amoeba).